The sequence spans 440 residues: D-serine dehydratase (440 aa).

N6-(pyridoxal phosphate)lysine is present on K116.

This sequence belongs to the serine/threonine dehydratase family. DsdA subfamily. As to quaternary structure, monomer. Pyridoxal 5'-phosphate serves as cofactor.

It catalyses the reaction D-serine = pyruvate + NH4(+). The protein is D-serine dehydratase of Salmonella dublin (strain CT_02021853).